The primary structure comprises 332 residues: dTDP-3,4-didehydro-2,6-dideoxy-alpha-D-glucose 3-reductase (332 aa).

12-18 (CASFAWR) is a binding site for NADP(+). A substrate-binding site is contributed by Arg-19. NADP(+) is bound by residues 37–38 (SR), Tyr-58, Leu-74, and His-79. Lys-97 serves as the catalytic Proton donor. 2 residues coordinate NADP(+): Arg-165 and Asp-177. Positions 235 and 255 each coordinate substrate.

Belongs to the Gfo/Idh/MocA family. As to quaternary structure, monomer.

It catalyses the reaction dTDP-4-dehydro-2,6-dideoxy-alpha-D-glucose + NADP(+) = dTDP-3,4-didehydro-2,6-dideoxy-alpha-D-glucose + NADPH + H(+). Its function is as follows. Involved in the biosynthesis of forosamine ((4-dimethylamino)-2,3,4,6-tetradeoxy-alpha-D-threo-hexopyranose), a highly deoxygenated sugar component of several bioactive natural products such as the insecticidal spinosyns A and D. Catalyzes the reduction of the C-3 keto moiety of dTDP-3,4-diketo-2,6-dideoxy-alpha-D-glucose to yield dTDP-4-keto-2,6-dideoxy-alpha-D-glucose. NADPH is the better reductant, however NADH can also be used. This is dTDP-3,4-didehydro-2,6-dideoxy-alpha-D-glucose 3-reductase from Saccharopolyspora spinosa.